The sequence spans 104 residues: Cell division topological specificity factor (104 aa).

This sequence belongs to the MinE family.

Prevents the cell division inhibition by proteins MinC and MinD at internal division sites while permitting inhibition at polar sites. This ensures cell division at the proper site by restricting the formation of a division septum at the midpoint of the long axis of the cell. The polypeptide is Cell division topological specificity factor (Sorangium cellulosum (strain So ce56) (Polyangium cellulosum (strain So ce56))).